We begin with the raw amino-acid sequence, 268 residues long: Tryptophan synthase alpha chain (268 aa).

Active-site proton acceptor residues include E49 and D60.

This sequence belongs to the TrpA family. As to quaternary structure, tetramer of two alpha and two beta chains.

It catalyses the reaction (1S,2R)-1-C-(indol-3-yl)glycerol 3-phosphate + L-serine = D-glyceraldehyde 3-phosphate + L-tryptophan + H2O. It functions in the pathway amino-acid biosynthesis; L-tryptophan biosynthesis; L-tryptophan from chorismate: step 5/5. Functionally, the alpha subunit is responsible for the aldol cleavage of indoleglycerol phosphate to indole and glyceraldehyde 3-phosphate. The sequence is that of Tryptophan synthase alpha chain from Escherichia coli O127:H6 (strain E2348/69 / EPEC).